Here is a 599-residue protein sequence, read N- to C-terminus: Elongation factor 4 (599 aa).

The 183-residue stretch at 5 to 187 (SHIRNFSIIA…VLIKSVPAPV (183 aa)) folds into the tr-type G domain. Residues 17 to 22 (DHGKST) and 134 to 137 (NKID) contribute to the GTP site.

It belongs to the TRAFAC class translation factor GTPase superfamily. Classic translation factor GTPase family. LepA subfamily.

It localises to the cell inner membrane. The catalysed reaction is GTP + H2O = GDP + phosphate + H(+). Its function is as follows. Required for accurate and efficient protein synthesis under certain stress conditions. May act as a fidelity factor of the translation reaction, by catalyzing a one-codon backward translocation of tRNAs on improperly translocated ribosomes. Back-translocation proceeds from a post-translocation (POST) complex to a pre-translocation (PRE) complex, thus giving elongation factor G a second chance to translocate the tRNAs correctly. Binds to ribosomes in a GTP-dependent manner. This is Elongation factor 4 from Saccharophagus degradans (strain 2-40 / ATCC 43961 / DSM 17024).